A 442-amino-acid chain; its full sequence is MKLQYLVALLFVQAVPPVTAGYIHQYALAGSAIRQPIDQKTQREDLNKLVSDSPLLSLHRTICEIESVSNHEGAVGEMLIKYLRDHDFTVEKQIVPADRGTNSTAERFNIWAYPKGFPRPKIILTSHIDTVPPHIKYSLHAPDGDFDRAKVRIMGRGTVDAKASVAAQIIAALKHLKSNKDIPLGLLFVVSEEVGGSGMVHFSNSELNTNPPFFHTLIFGEPTDLTLVDGHKGNLRVTIHAKGVAAHSGYPWLGHSAISEILPILARMDELGDIPVETGGLPSSEKYGRTTVNIGTIKGGAADNVVPETASASISVRLAAGTPEEAEEVIRRAVNDVSGGSTNITVNFPDSMPYPPIDLDVDVEGFDISTVNYGTDIPKLEIHDEELEVKVKRYLYGPGTIFVAHGAEEGITVGDLEKAVEGYSKLIDAAVERDWPREVVVN.

A signal peptide spans 1-20; the sequence is MKLQYLVALLFVQAVPPVTA. Residue Asn102 is glycosylated (N-linked (GlcNAc...) asparagine). A Zn(2+)-binding site is contributed by Asp160. Catalysis depends on Glu192, which acts as the Proton acceptor. Glu193 contacts Zn(2+). A glycan (N-linked (GlcNAc...) asparagine) is linked at Asn343.

It belongs to the peptidase M20A family. The cofactor is Zn(2+).

Its subcellular location is the secreted. In Paracoccidioides lutzii (strain ATCC MYA-826 / Pb01) (Paracoccidioides brasiliensis), this protein is Probable carboxypeptidase PAAG_00768.